We begin with the raw amino-acid sequence, 725 residues long: MALLLPLLPLLVWAAGPPGPLGPPEHSEPPLPAEPPDALFAAGAEAYARGDWPAVVLQMERALRARAAIRARSVRCRLRCANATAVVPTDGLEPTLHDLLFFRGLLRRAACLRGCGPTQPSRYRLGEELEREFRKRSPYNYLQVAYFKINKVAKAVAAAHTFFVANPEHVEMKQNLEYYQMMAGVRESDFADLEARPHMTEFRLGVRFYSEEQPAAAVLHLEKALQEYFVADTECRALCEGPYDYEGYNYLEYNADLFQAMTDHYMQVLSCKQGCVTELASQPGREKPLEDFLPSHFNYLQFAYYNNGNYEKAIECAKTYLLFFPNDEVMNQNLAYYTAVLGEDLARPIEPRKEIQAYRQRSLMEKELLFFSYDVFGIPFVDPDTWTPEEVIPKRLREKQKVERETAARISEEIGNLMKEIETLVEEKAKESAEMSKFIREGGPLVYEGASVTMNSKSLNGSQRVVVDGVLSAEECRELQRLTNAAASAGDGYRGKTSPHTPSETFYGVTVLKALKLGQEGKVPLQSAHLYYNVTEKVRHMMESYFRLEVPLHFSYSHLVCRTAIDEKQEGRSDNSHEVHVDNCILNAEALVCVKEPPAYTFRDYSAILYLNGDFEGGAFYFTELDAKTQTAEVQPQCGRAVGFSSGSENPHGVKAVTKGQRCAIALWFTLDPRHSERERVQADDLVKMLFRTEEVDLLQETSAEQEPTAATSTAGLHAAGKDEL.

The signal sequence occupies residues 1–14; it reads MALLLPLLPLLVWA. The stretch at 36–69 is one TPR 1 repeat; the sequence is PDALFAAGAEAYARGDWPAVVLQMERALRARAAI. Asparagine 82 carries N-linked (GlcNAc...) asparagine glycosylation. 3 TPR repeats span residues 136–169, 198–231, and 294–327; these read RSPYNYLQVAYFKINKVAKAVAAAHTFFVANPEH, HMTEFRLGVRFYSEEQPAAAVLHLEKALQEYFVA, and PSHFNYLQFAYYNNGNYEKAIECAKTYLLFFPND. A coiled-coil region spans residues 394-441; the sequence is KRLREKQKVERETAARISEEIGNLMKEIETLVEEKAKESAEMSKFIRE. N-linked (GlcNAc...) asparagine glycans are attached at residues asparagine 460 and asparagine 533. The Fe2OG dioxygenase domain maps to 557 to 671; the sequence is SHLVCRTAID…RCAIALWFTL (115 aa). Residues histidine 580, aspartate 582, and histidine 652 each coordinate Fe cation. The active site involves arginine 662. The segment covering 701-715 has biased composition (polar residues); the sequence is ETSAEQEPTAATSTA. A disordered region spans residues 701 to 725; sequence ETSAEQEPTAATSTAGLHAAGKDEL. The short motif at 722–725 is the Prevents secretion from ER element; that stretch reads KDEL.

It belongs to the leprecan family. As to quaternary structure, binds unfolded collagen in a complex with CYPB and CRTAP. Fe cation serves as cofactor. L-ascorbate is required as a cofactor. Expressed in embryonic dermis, tendon, cartilage, liver and kidney. Expression in the kidney is restricted to the calyx. In the liver, expression is restricted to the interlobular septum.

It is found in the endoplasmic reticulum. The catalysed reaction is L-prolyl-[collagen] + 2-oxoglutarate + O2 = trans-3-hydroxy-L-prolyl-[collagen] + succinate + CO2. In terms of biological role, has prolyl 3-hydroxylase activity catalyzing the post-translational formation of 3-hydroxyproline in -Xaa-Pro-Gly-sequences in collagens, especially types IV and V. May be involved in the secretoty pathway of cells. Has growth suppressive activity in fibroblasts. In Gallus gallus (Chicken), this protein is Prolyl 3-hydroxylase 1.